A 183-amino-acid polypeptide reads, in one-letter code: Translation initiation factor IF-3 (183 aa).

It belongs to the IF-3 family. As to quaternary structure, monomer.

It localises to the cytoplasm. Its function is as follows. IF-3 binds to the 30S ribosomal subunit and shifts the equilibrium between 70S ribosomes and their 50S and 30S subunits in favor of the free subunits, thus enhancing the availability of 30S subunits on which protein synthesis initiation begins. The chain is Translation initiation factor IF-3 from Aliivibrio salmonicida (strain LFI1238) (Vibrio salmonicida (strain LFI1238)).